We begin with the raw amino-acid sequence, 266 residues long: 4-hydroxy-tetrahydrodipicolinate reductase (266 aa).

10-15 (GPRGRM) provides a ligand contact to NAD(+). Lys38 provides a ligand contact to NADP(+). Residues 99 to 101 (GTT) and 125 to 128 (APNF) contribute to the NAD(+) site. The active-site Proton donor/acceptor is His155. His156 is a (S)-2,3,4,5-tetrahydrodipicolinate binding site. Residue Lys159 is the Proton donor of the active site. 165 to 166 (GT) is a binding site for (S)-2,3,4,5-tetrahydrodipicolinate.

Belongs to the DapB family.

It localises to the cytoplasm. It carries out the reaction (S)-2,3,4,5-tetrahydrodipicolinate + NAD(+) + H2O = (2S,4S)-4-hydroxy-2,3,4,5-tetrahydrodipicolinate + NADH + H(+). The catalysed reaction is (S)-2,3,4,5-tetrahydrodipicolinate + NADP(+) + H2O = (2S,4S)-4-hydroxy-2,3,4,5-tetrahydrodipicolinate + NADPH + H(+). The protein operates within amino-acid biosynthesis; L-lysine biosynthesis via DAP pathway; (S)-tetrahydrodipicolinate from L-aspartate: step 4/4. Catalyzes the conversion of 4-hydroxy-tetrahydrodipicolinate (HTPA) to tetrahydrodipicolinate. This is 4-hydroxy-tetrahydrodipicolinate reductase from Bacillus cereus (strain B4264).